The following is a 743-amino-acid chain: Dystrobrevin alpha (743 aa).

Residues 1 to 288 form an interaction with MAGEE1 region; that stretch reads MIEDSGKRGN…SHSNQHQMKE (288 aa). The segment at 238–294 adopts a ZZ-type zinc-finger fold; sequence FHPVECSYCHSESMMGFRYRCQQCHNYQLCQDCFWRGHAGGSHSNQHQMKEYTSWKS. Zn(2+)-binding residues include cysteine 243, cysteine 246, cysteine 258, cysteine 261, cysteine 267, cysteine 270, histidine 280, and histidine 284. The interval 400 to 450 is syntrophin-binding region; it reads DRLADEHVLIGLYVNMLRNNPSCMLESSNRLDEEHRLIARYAARLAAESSS. Residues 461-556 adopt a coiled-coil conformation; it reads DISFTIDANK…EGLMKLLKTQ (96 aa). The interval 556–575 is disordered; that stretch reads QGAGSPRSSPSHTISRPIPM. Positions 557 to 569 are enriched in polar residues; that stretch reads GAGSPRSSPSHTI. Serine 662 carries the phosphoserine modification.

It belongs to the dystrophin family. Dystrobrevin subfamily. As to quaternary structure, interacts with dystrophin, utrophin and the syntrophins SNTA1, SNTB1, SNTB2, SNTG1 and SNTG2. Interacts with MAGEE1. Binds dystrobrevin binding protein 1. Interacts with CTNNAL1. The interaction is required for correct localization of both CTNNAL1 and DTNA. In terms of assembly, does not interact with dystrophin. Post-translationally, phosphorylation of DTN-1 on tyrosine kinase substrate domain present in the C-terminus. As to expression, highly expressed in brain, skeletal and cardiac muscles, and expressed at lower levels in lung, liver and pancreas. Isoform 2 is not expressed in cardiac muscle. Isoform 7 and isoform 8 are only expressed in muscle.

It is found in the cytoplasm. It localises to the synapse. The protein localises to the cell membrane. May be involved in the formation and stability of synapses as well as being involved in the clustering of nicotinic acetylcholine receptors. The polypeptide is Dystrobrevin alpha (Homo sapiens (Human)).